The chain runs to 265 residues: 3-methyl-2-oxobutanoate hydroxymethyltransferase (265 aa).

Mg(2+)-binding residues include D43 and D82. 3-methyl-2-oxobutanoate contacts are provided by residues 43–44 (DS), D82, and K111. E113 is a binding site for Mg(2+). E180 acts as the Proton acceptor in catalysis.

This sequence belongs to the PanB family. As to quaternary structure, homodecamer; pentamer of dimers. It depends on Mg(2+) as a cofactor.

Its subcellular location is the cytoplasm. The enzyme catalyses 3-methyl-2-oxobutanoate + (6R)-5,10-methylene-5,6,7,8-tetrahydrofolate + H2O = 2-dehydropantoate + (6S)-5,6,7,8-tetrahydrofolate. It participates in cofactor biosynthesis; (R)-pantothenate biosynthesis; (R)-pantoate from 3-methyl-2-oxobutanoate: step 1/2. Functionally, catalyzes the reversible reaction in which hydroxymethyl group from 5,10-methylenetetrahydrofolate is transferred onto alpha-ketoisovalerate to form ketopantoate. This Francisella tularensis subsp. mediasiatica (strain FSC147) protein is 3-methyl-2-oxobutanoate hydroxymethyltransferase.